The sequence spans 422 residues: Tk-subtilisin (422 aa).

Positions 1–24 (MKKSIALVLSIVLLAALFAVPASA) are cleaved as a signal peptide. The propeptide occupies 25–106 (GEQNTIRVIV…SWLGGGSTQP (82 aa)). The region spanning 111–417 (PWGIERVKAP…YGVVRAALAV (307 aa)) is the Peptidase S8 domain. Active-site charge relay system residues include aspartate 139, histidine 177, and serine 348.

This sequence belongs to the peptidase S8 family. As to quaternary structure, monomer. Ca(2+) is required as a cofactor.

The protein localises to the secreted. Its function is as follows. Has a broad substrate specificity with a slight preference to large hydrophobic amino acid residues at the P1 position. The polypeptide is Tk-subtilisin (Thermococcus kodakarensis (strain ATCC BAA-918 / JCM 12380 / KOD1) (Pyrococcus kodakaraensis (strain KOD1))).